A 319-amino-acid polypeptide reads, in one-letter code: Lipoyl synthase (319 aa).

Residues 1-29 form a disordered region; sequence MVVVVDTVSDKPIRPRHPEKAARPDALSP. Residues 8–29 show a composition bias toward basic and acidic residues; that stretch reads VSDKPIRPRHPEKAARPDALSP. [4Fe-4S] cluster contacts are provided by Cys61, Cys66, Cys72, Cys87, Cys91, Cys94, and Ser300. A Radical SAM core domain is found at 73 to 289; sequence WDRKHATFMI…ESLAYAKGFL (217 aa).

It belongs to the radical SAM superfamily. Lipoyl synthase family. [4Fe-4S] cluster serves as cofactor.

Its subcellular location is the cytoplasm. It carries out the reaction [[Fe-S] cluster scaffold protein carrying a second [4Fe-4S](2+) cluster] + N(6)-octanoyl-L-lysyl-[protein] + 2 oxidized [2Fe-2S]-[ferredoxin] + 2 S-adenosyl-L-methionine + 4 H(+) = [[Fe-S] cluster scaffold protein] + N(6)-[(R)-dihydrolipoyl]-L-lysyl-[protein] + 4 Fe(3+) + 2 hydrogen sulfide + 2 5'-deoxyadenosine + 2 L-methionine + 2 reduced [2Fe-2S]-[ferredoxin]. The protein operates within protein modification; protein lipoylation via endogenous pathway; protein N(6)-(lipoyl)lysine from octanoyl-[acyl-carrier-protein]: step 2/2. In terms of biological role, catalyzes the radical-mediated insertion of two sulfur atoms into the C-6 and C-8 positions of the octanoyl moiety bound to the lipoyl domains of lipoate-dependent enzymes, thereby converting the octanoylated domains into lipoylated derivatives. The sequence is that of Lipoyl synthase from Rhodopseudomonas palustris (strain BisA53).